Reading from the N-terminus, the 358-residue chain is Methionine aminopeptidase 2 (358 aa).

His109 contributes to the substrate binding site. Positions 130, 141, and 210 each coordinate a divalent metal cation. His218 is a binding site for substrate. Positions 243 and 339 each coordinate a divalent metal cation.

Belongs to the peptidase M24A family. Methionine aminopeptidase eukaryotic type 2 subfamily. Co(2+) is required as a cofactor. The cofactor is Zn(2+). Mn(2+) serves as cofactor. Requires Fe(2+) as cofactor.

Its subcellular location is the cytoplasm. The catalysed reaction is Release of N-terminal amino acids, preferentially methionine, from peptides and arylamides.. Irreversibly inhibited by the fungal metabolite fumagillin and the fumagillin analog TNP470, antiangiogenic drugs. In terms of biological role, cotranslationally removes the N-terminal methionine from nascent proteins. The N-terminal methionine is often cleaved when the second residue in the primary sequence is small and uncharged (Met-Ala-, Cys, Gly, Pro, Ser, Thr, or Val). This Encephalitozoon hellem (strain ATCC 50504) (Microsporidian parasite) protein is Methionine aminopeptidase 2.